A 194-amino-acid chain; its full sequence is Mpv17-like protein (194 aa).

The Cytoplasmic portion of the chain corresponds to 1–14 (MASWWRAFPQAARR). Residues 15 to 34 (YPWPTNVLLYAGLFSAGDAL) form a helical membrane-spanning segment. A targeting to peroxisomes region spans residues 16–55 (PWPTNVLLYAGLFSAGDALQQRLRGGPADWRQTRRVATLA). The Lumenal segment spans residues 35-50 (QQRLRGGPADWRQTRR). The helical transmembrane segment at 51–67 (VATLAVTFHGNFNYVWL) threads the bilayer. Over 68 to 91 (RLLERALPGRAPRTVLAKVLCDQT) the chain is Cytoplasmic. Residues 92–110 (VGGPIALSAFYVGMSVLQG) form a helical membrane-spanning segment. Topologically, residues 111–150 (KDDIFLDLKQKFWNTYKSGLMYWPFVQLTNFSLVPVHWRT) are lumenal. The chain crosses the membrane as a helical span at residues 151–168 (AYTGLCAFLWATFLCFSQ). The Cytoplasmic portion of the chain corresponds to 169–194 (QSGDGTLQSIFIFLRRKEASDKSPEK).

This sequence belongs to the peroxisomal membrane protein PXMP2/4 family. As to expression, isoform 1 and isoform 3 are expressed in the kidney (at protein level). Isoform 1 is expressed in the kidney, spleen, heart, brain, lung and liver. Isoform 3 is expressed in the kidney. Isoform 1 and isoform 3 expression increase during development, reache their highest level in adulthood and decrease with aging.

The protein localises to the peroxisome membrane. The protein resides in the cytoplasm. Participates in reactive oxygen species metabolism by up- or down-regulation of the genes of antioxidant enzymes. Protective against the mitochondrial apoptotic cascade. In terms of biological role, participates in reactive oxygen species metabolism by up- or down-regulation of the genes of antioxidant enzymes. The sequence is that of Mpv17-like protein (Mpv17l) from Mus musculus (Mouse).